Here is a 224-residue protein sequence, read N- to C-terminus: Cerebellin-2 (224 aa).

The first 51 residues, 1–51 (MQAPGRGPLGLRLMMPGRRGALREPGGCGSCLGVALALLLLLLPACCPVRA), serve as a signal peptide directing secretion. N-linked (GlcNAc...) asparagine glycosylation is found at asparagine 53 and asparagine 110. Residues 88-224 (SGSAKVAFSA…TFSGFLVFPL (137 aa)) form the C1q domain.

In terms of assembly, homohexamer; disulfide-linked homotrimers. The trimers are assembled via the globular C1q domains. The trimers associate via N-terminal cysteine residues to form disulfide-linked hexamers. May form homooligomers or heterooligomers with CBLN1 and CBLN3 prior to secretion. Once secreted, does not interact with other CBLN family members. Interacts with GRID2, and more weakly with GRID1. Interacts with NRXN1 and NRXN2 long and short isoforms produced by alternative promoter usage. Weakly interacts with NRXN3 short isoform and not at all with NRXN3 long isoform.

The protein localises to the secreted. Its function is as follows. Acts as a synaptic organizer in specific subsets of neurons in the brain. Essential for long-term maintenance but not establishment of excitatory synapses. Functions as part of a trans-synaptic complex by binding to postsynaptic GRID1 and presynaptic neurexins. This interaction helps regulate the activity of NMDA and AMPA receptors at hippocampal synapses without affecting synapse formation. NRXN1B-CBLN2-GRID1 complex transduce presynaptic signals into postsynaptic NMDAR response. NRXN3B-CBLN2-GRID1 complex transduce presynaptic signals into postsynaptic AMPAR response. In Homo sapiens (Human), this protein is Cerebellin-2.